A 145-amino-acid polypeptide reads, in one-letter code: Superoxide dismutase [Mn/Fe] (145 aa).

Residues His10 and His64 each coordinate Fe(3+). The Mn(2+) site is built by His10 and His64.

It belongs to the iron/manganese superoxide dismutase family. It depends on Mn(2+) as a cofactor. Fe(3+) is required as a cofactor.

It catalyses the reaction 2 superoxide + 2 H(+) = H2O2 + O2. Destroys superoxide anion radicals which are normally produced within the cells and which are toxic to biological systems. Catalyzes the dismutation of superoxide anion radicals into O2 and H2O2 by successive reduction and oxidation of the transition metal ion at the active site. The sequence is that of Superoxide dismutase [Mn/Fe] (sodA) from Streptococcus porcinus.